We begin with the raw amino-acid sequence, 259 residues long: Ubiquinone/menaquinone biosynthesis C-methyltransferase UbiE (259 aa).

Residues Thr82, Asp103, 131-132 (NA), and Ser148 each bind S-adenosyl-L-methionine.

It belongs to the class I-like SAM-binding methyltransferase superfamily. MenG/UbiE family.

The catalysed reaction is a 2-demethylmenaquinol + S-adenosyl-L-methionine = a menaquinol + S-adenosyl-L-homocysteine + H(+). It carries out the reaction a 2-methoxy-6-(all-trans-polyprenyl)benzene-1,4-diol + S-adenosyl-L-methionine = a 5-methoxy-2-methyl-3-(all-trans-polyprenyl)benzene-1,4-diol + S-adenosyl-L-homocysteine + H(+). It participates in quinol/quinone metabolism; menaquinone biosynthesis; menaquinol from 1,4-dihydroxy-2-naphthoate: step 2/2. It functions in the pathway cofactor biosynthesis; ubiquinone biosynthesis. In terms of biological role, methyltransferase required for the conversion of demethylmenaquinol (DMKH2) to menaquinol (MKH2) and the conversion of 2-polyprenyl-6-methoxy-1,4-benzoquinol (DDMQH2) to 2-polyprenyl-3-methyl-6-methoxy-1,4-benzoquinol (DMQH2). This is Ubiquinone/menaquinone biosynthesis C-methyltransferase UbiE from Haemophilus ducreyi (strain 35000HP / ATCC 700724).